The chain runs to 241 residues: Probable transcriptional regulatory protein Reut_A2522 (241 aa).

The protein belongs to the TACO1 family.

The protein resides in the cytoplasm. This is Probable transcriptional regulatory protein Reut_A2522 from Cupriavidus pinatubonensis (strain JMP 134 / LMG 1197) (Cupriavidus necator (strain JMP 134)).